The primary structure comprises 547 residues: CTP synthase (547 aa).

Residues 1-269 (MKTKFIFVTG…DQKVAIMLRL (269 aa)) are amidoligase domain. Ser-14 is a binding site for CTP. UTP is bound at residue Ser-14. ATP contacts are provided by residues 15–20 (SLGKGL) and Asp-72. Mg(2+)-binding residues include Asp-72 and Glu-143. CTP-binding positions include 150 to 152 (DIE), 190 to 195 (KTKPTQ), and Lys-226. UTP-binding positions include 190–195 (KTKPTQ) and Lys-226. Residues 294–547 (TVAIVGKYVD…IGAAKKHAKV (254 aa)) form the Glutamine amidotransferase type-1 domain. Residue Gly-356 coordinates L-glutamine. Cys-383 (nucleophile; for glutamine hydrolysis) is an active-site residue. Residues 384–387 (LGMQ), Glu-407, and Arg-475 contribute to the L-glutamine site. Catalysis depends on residues His-520 and Glu-522.

This sequence belongs to the CTP synthase family. As to quaternary structure, homotetramer.

The catalysed reaction is UTP + L-glutamine + ATP + H2O = CTP + L-glutamate + ADP + phosphate + 2 H(+). The enzyme catalyses L-glutamine + H2O = L-glutamate + NH4(+). It catalyses the reaction UTP + NH4(+) + ATP = CTP + ADP + phosphate + 2 H(+). It functions in the pathway pyrimidine metabolism; CTP biosynthesis via de novo pathway; CTP from UDP: step 2/2. With respect to regulation, allosterically activated by GTP, when glutamine is the substrate; GTP has no effect on the reaction when ammonia is the substrate. The allosteric effector GTP functions by stabilizing the protein conformation that binds the tetrahedral intermediate(s) formed during glutamine hydrolysis. Inhibited by the product CTP, via allosteric rather than competitive inhibition. Catalyzes the ATP-dependent amination of UTP to CTP with either L-glutamine or ammonia as the source of nitrogen. Regulates intracellular CTP levels through interactions with the four ribonucleotide triphosphates. The polypeptide is CTP synthase (Desulfovibrio desulfuricans (strain ATCC 27774 / DSM 6949 / MB)).